A 177-amino-acid polypeptide reads, in one-letter code: Secretion monitor (177 aa).

Residues 1 to 37 form the signal peptide; sequence MIGILNRWRQFGRRYFWPHLLLGMVAASLGVPLNLSG.

Belongs to the SecM family.

The protein resides in the cytoplasm. The protein localises to the cytosol. Its subcellular location is the periplasm. Its function is as follows. Regulates secA expression by translational coupling of the secM secA operon. Translational pausing at a specific Pro residue 5 residues before the end of the protein may allow disruption of a mRNA repressor helix that normally suppresses secA translation initiation. The sequence is that of Secretion monitor from Yersinia pestis bv. Antiqua (strain Antiqua).